Reading from the N-terminus, the 236-residue chain is NLP effector protein 3 (236 aa).

The first 19 residues, 1–19 (MNLLGFLAVVALSTASVQA), serve as a signal peptide directing secretion. The short motif at 103 to 113 (AIMYSWYFPKD) is the Conserved undecapeptide motif I element. Positions 120–126 (GHRHDWE) match the Hepta-peptide GHRHDWE motif II motif.

The protein belongs to the Necrosis inducing protein (NPP1) family.

It localises to the secreted. Functionally, secreted effector that contributes to virulence during infection by P.capsici. Induces distinct chlorosis at 3 days after inoculation of host C.annuum leaves, and all the chlorotic areas gradually turn brown and become moderately necrotic at 7 days after inoculation. Leads only to chlorotic areas, without necrosis at 7 days after non-host N.benthamiana leaves infection. Induces cell death in hot pepper. In Phytophthora capsici, this protein is NLP effector protein 3.